Here is a 294-residue protein sequence, read N- to C-terminus: ATP synthase gamma chain (294 aa).

This sequence belongs to the ATPase gamma chain family. As to quaternary structure, F-type ATPases have 2 components, CF(1) - the catalytic core - and CF(0) - the membrane proton channel. CF(1) has five subunits: alpha(3), beta(3), gamma(1), delta(1), epsilon(1). CF(0) has three main subunits: a, b and c.

It is found in the cell inner membrane. Produces ATP from ADP in the presence of a proton gradient across the membrane. The gamma chain is believed to be important in regulating ATPase activity and the flow of protons through the CF(0) complex. This chain is ATP synthase gamma chain, found in Campylobacter jejuni subsp. doylei (strain ATCC BAA-1458 / RM4099 / 269.97).